Here is a 402-residue protein sequence, read N- to C-terminus: Acetyl-CoA acetyltransferase (402 aa).

C90 (acyl-thioester intermediate) is an active-site residue. CoA-binding residues include Y185 and K230. Y185 is a K(+) binding site. Residue A250 participates in K(+) binding. Residue S251 coordinates CoA. K(+) is bound at residue V348. Active-site proton acceptor residues include H352 and C382.

This sequence belongs to the thiolase-like superfamily. Thiolase family. Homotetramer.

The protein resides in the cytoplasm. Its subcellular location is the cytosol. The enzyme catalyses 2 acetyl-CoA = acetoacetyl-CoA + CoA. It participates in metabolic intermediate biosynthesis; (R)-mevalonate biosynthesis; (R)-mevalonate from acetyl-CoA: step 1/3. Functionally, acetyl-CoA acetyltransferase; part of the first module of ergosterol biosynthesis pathway that includes the early steps of the pathway, conserved across all eukaryotes, and which results in the formation of mevalonate from acetyl-coenzyme A (acetyl-CoA). ERG10 catalyzes the formation of acetoacetyl-CoA from acetyl-CoA. The first module starts with the action of the cytosolic acetyl-CoA acetyltransferase ERG10 that catalyzes the formation of acetoacetyl-CoA. The hydroxymethylglutaryl-CoA synthase ERG13 then condenses acetyl-CoA with acetoacetyl-CoA to form HMG-CoA. The 3-hydroxy-3-methylglutaryl-coenzyme A (HMG-CoA) reductase HMG1 finally reduces HMG-CoA to produce mevalonate. The sequence is that of Acetyl-CoA acetyltransferase from Candida albicans (strain SC5314 / ATCC MYA-2876) (Yeast).